Here is a 368-residue protein sequence, read N- to C-terminus: Phospho-N-acetylmuramoyl-pentapeptide-transferase (368 aa).

Transmembrane regions (helical) follow at residues 30-50 (AAAI…IRYL), 72-92 (LPTM…FLWA), 98-118 (HVWL…IDDY), 139-159 (ISLG…AVLL), 170-190 (LSID…TAVS), 201-221 (GLAS…SYLA), 238-258 (GGEI…FLWF), 264-286 (EIIM…ALLI), and 345-365 (KIVI…LMTL).

Belongs to the glycosyltransferase 4 family. MraY subfamily. Mg(2+) is required as a cofactor.

It localises to the cell inner membrane. It carries out the reaction UDP-N-acetyl-alpha-D-muramoyl-L-alanyl-gamma-D-glutamyl-meso-2,6-diaminopimeloyl-D-alanyl-D-alanine + di-trans,octa-cis-undecaprenyl phosphate = di-trans,octa-cis-undecaprenyl diphospho-N-acetyl-alpha-D-muramoyl-L-alanyl-D-glutamyl-meso-2,6-diaminopimeloyl-D-alanyl-D-alanine + UMP. The protein operates within cell wall biogenesis; peptidoglycan biosynthesis. In terms of biological role, catalyzes the initial step of the lipid cycle reactions in the biosynthesis of the cell wall peptidoglycan: transfers peptidoglycan precursor phospho-MurNAc-pentapeptide from UDP-MurNAc-pentapeptide onto the lipid carrier undecaprenyl phosphate, yielding undecaprenyl-pyrophosphoryl-MurNAc-pentapeptide, known as lipid I. In Chlorobium phaeobacteroides (strain DSM 266 / SMG 266 / 2430), this protein is Phospho-N-acetylmuramoyl-pentapeptide-transferase.